Here is a 286-residue protein sequence, read N- to C-terminus: Polyamine aminopropyltransferase (286 aa).

The 236-residue stretch at 2–237 (DLWFSEVHTP…GYWLFGFASK (236 aa)) folds into the PABS domain. Gln-31 provides a ligand contact to S-methyl-5'-thioadenosine. Asp-86 contacts spermidine. S-methyl-5'-thioadenosine contacts are provided by residues Glu-106 and 137 to 138 (NG). Asp-155 (proton acceptor) is an active-site residue.

The protein belongs to the spermidine/spermine synthase family. As to quaternary structure, homodimer or homotetramer.

The protein resides in the cytoplasm. It catalyses the reaction S-adenosyl 3-(methylsulfanyl)propylamine + putrescine = S-methyl-5'-thioadenosine + spermidine + H(+). The protein operates within amine and polyamine biosynthesis; spermidine biosynthesis; spermidine from putrescine: step 1/1. Functionally, catalyzes the irreversible transfer of a propylamine group from the amino donor S-adenosylmethioninamine (decarboxy-AdoMet) to putrescine (1,4-diaminobutane) to yield spermidine. This chain is Polyamine aminopropyltransferase, found in Streptococcus pneumoniae serotype 4 (strain ATCC BAA-334 / TIGR4).